The sequence spans 501 residues: Glycerol kinase (501 aa).

Threonine 14 contributes to the ADP binding site. Residues threonine 14, threonine 15, and serine 16 each contribute to the ATP site. A sn-glycerol 3-phosphate-binding site is contributed by threonine 14. Arginine 18 serves as a coordination point for ADP. Sn-glycerol 3-phosphate is bound by residues arginine 84, glutamate 85, tyrosine 136, and aspartate 246. Residues arginine 84, glutamate 85, tyrosine 136, aspartate 246, and glutamine 247 each contribute to the glycerol site. The ADP site is built by threonine 268 and glycine 311. Residues threonine 268, glycine 311, glutamine 315, and glycine 412 each contribute to the ATP site. 2 residues coordinate ADP: glycine 412 and asparagine 416.

The protein belongs to the FGGY kinase family. In terms of assembly, homotetramer and homodimer (in equilibrium).

It catalyses the reaction glycerol + ATP = sn-glycerol 3-phosphate + ADP + H(+). It participates in polyol metabolism; glycerol degradation via glycerol kinase pathway; sn-glycerol 3-phosphate from glycerol: step 1/1. With respect to regulation, activated by phosphorylation and inhibited by fructose 1,6-bisphosphate (FBP). Functionally, key enzyme in the regulation of glycerol uptake and metabolism. Catalyzes the phosphorylation of glycerol to yield sn-glycerol 3-phosphate. In Desulforamulus reducens (strain ATCC BAA-1160 / DSM 100696 / MI-1) (Desulfotomaculum reducens), this protein is Glycerol kinase.